Reading from the N-terminus, the 889-residue chain is Disease resistance protein UNI (889 aa).

A coiled-coil region spans residues 19–64; sequence NCLIGKSYIRTLEKNLRALQREMEDLRAIQHEVQNKVARDEARHQR. The interval 131 to 152 is disordered; it reads GNFDEVSQPPPRSEVEERPTQP. The 304-residue stretch at 137 to 440 folds into the NB-ARC domain; it reads SQPPPRSEVE…CEGFIGEDQV (304 aa). ATP is bound at residue 179–186; it reads GMGGVGKT. LRR repeat units follow at residues 510 to 532, 533 to 555, 557 to 580, 581 to 603, 604 to 625, 626 to 652, 653 to 676, 698 to 721, and 825 to 848; these read WGAV…ESKC, SELT…FIRY, QKLV…ISGL, VSLQ…LKEL, KKLT…GISR, LLSL…LQQL, QNLQ…LAKL, MENL…ESET, and CPKL…EIHM.

It belongs to the disease resistance NB-LRR family. In terms of assembly, interacts with RPT2A.

Its function is as follows. Involved in disease resistance via the salicylic acid (SA) signaling pathway. Involved in shoot architecture development via the cytokinin signaling pathway. In Arabidopsis thaliana (Mouse-ear cress), this protein is Disease resistance protein UNI.